Consider the following 341-residue polypeptide: Large ribosomal subunit protein uL29m (341 aa).

The disordered stretch occupies residues Leu44–Asp74. The segment covering Arg48–Val62 has biased composition (basic residues).

Belongs to the universal ribosomal protein uL29 family. As to quaternary structure, component of the mitochondrial large ribosomal subunit. Mature mitochondrial ribosomes consist of a small (37S) and a large (54S) subunit. The 37S subunit contains at least 33 different proteins and 1 molecule of RNA (15S). The 54S subunit contains at least 45 different proteins and 1 molecule of RNA (21S).

It localises to the mitochondrion. This Eremothecium gossypii (strain ATCC 10895 / CBS 109.51 / FGSC 9923 / NRRL Y-1056) (Yeast) protein is Large ribosomal subunit protein uL29m (MRPL4).